Consider the following 253-residue polypeptide: 3-isopropylmalate dehydratase small subunit 3 (253 aa).

The N-terminal 56 residues, Met1–Arg56, are a transit peptide targeting the chloroplast.

The protein belongs to the LeuD family. Heterodimer of the large LEUC/IIL1 subunit and the small LEUD (SSU1, SSU2 or SSU3) subunits. As to expression, expressed in vascular bundles of roots, cotyledons and rosette leaves. Expressed in stem vascular bundles which branche off into lateral inflorescences. Expressed in connective tissues in anthers. In hypocotyls, expressed in parenchyma cells surrounding the vasculature. In rosette leaves, expressed in phloem cells and cells close to the xylem along the vascular bundles. In roots of adult plants, expressed in cells closely associated with the stele. In flowering stalks, expressed in parenchyma cells associated with the phloem or the xylem.

It localises to the plastid. It is found in the chloroplast stroma. It carries out the reaction (2R,3S)-3-isopropylmalate = (2S)-2-isopropylmalate. It catalyses the reaction a 2-(omega-methylsulfanyl)alkylmalate = a 2-(omega-methylsulfanyl)alkylmaleate + H2O. The enzyme catalyses 2-(3-methylsulfanyl)propylmalate = 2-(2-methylsulfanyl)propylmaleate + H2O. The catalysed reaction is a 3-(omega-methylsulfanyl)alkylmalate = a 2-(omega-methylsulfanyl)alkylmaleate + H2O. It carries out the reaction 2-(2-methylsulfanyl)ethylmalate = 2-(2-methylsulfanyl)ethylmaleate + H2O. It catalyses the reaction 3-(2-methylsulfanyl)ethylmalate = 2-(2-methylsulfanyl)ethylmaleate + H2O. The enzyme catalyses 3-(3-methylsulfanyl)propylmalate = 2-(2-methylsulfanyl)propylmaleate + H2O. The protein operates within amino-acid biosynthesis; L-leucine biosynthesis; L-leucine from 3-methyl-2-oxobutanoate: step 2/4. Its function is as follows. Catalyzes the isomerization between 2-isopropylmalate and 3-isopropylmalate, via the formation of 2-isopropylmaleate. Functions redundantly with LEUD1 in the methionine chain elongation pathway of aliphatic glucosinolate formation. The chain is 3-isopropylmalate dehydratase small subunit 3 from Arabidopsis thaliana (Mouse-ear cress).